The sequence spans 351 residues: Putative NBPF family member NBPF5 (351 aa).

2 coiled-coil regions span residues 10–43 and 69–115; these read SERA…EKFL and DSVL…KLRE. A disordered region spans residues 157-285; sequence HLVHKLSPEN…VPPRHHDKSN (129 aa). A compositionally biased stretch (acidic residues) spans 165–179; the sequence is ENDEDEDEDEDDKDE. One can recognise an Olduvai domain in the interval 174 to 261; sequence EDDKDEEVEK…EEEEALNIPP (88 aa). The segment covering 192-202 has biased composition (basic and acidic residues); that stretch reads EVQKTEEKEVP. Low complexity predominate over residues 214 to 226; sequence SNSHNPSNSNQPH. Composition is skewed to basic and acidic residues over residues 232–251 and 264–273; these read TFKE…HPHD and QNDHEEEEGK.

Belongs to the NBPF family. In terms of tissue distribution, expressed in brain and medulla.

Its subcellular location is the cytoplasm. In Homo sapiens (Human), this protein is Putative NBPF family member NBPF5.